A 370-amino-acid polypeptide reads, in one-letter code: Phosphate-binding protein PstS 3 (370 aa).

Residues 1 to 22 (MKLNRFGAAVGVLAAGALVLSA) form the signal peptide. Cysteine 23 carries the N-palmitoyl cysteine lipid modification. Residue cysteine 23 is the site of S-diacylglycerol cysteine attachment. Phosphate-binding positions include 56-58 (STA), serine 86, aspartate 104, and 191-193 (SGT).

It belongs to the PstS family. As to quaternary structure, the complex is composed of two ATP-binding proteins (PstB), two transmembrane proteins (PstC and PstA) and a solute-binding protein (PstS).

The protein localises to the cell membrane. Its function is as follows. Part of the ABC transporter complex PstSACB involved in phosphate import. This Mycobacterium bovis (strain ATCC BAA-935 / AF2122/97) protein is Phosphate-binding protein PstS 3 (pstS3).